Consider the following 354-residue polypeptide: Neuronal growth regulator 1 (354 aa).

Positions 1–37 are cleaved as a signal peptide; that stretch reads MDMMLLVQGACCSNQWLAAVLLSLCCLLPSCLPAGQS. 3 Ig-like C2-type domains span residues 38–134, 139–221, and 225–313; these read VDFP…VHLT, PKIY…KVVV, and PTIQ…LPLN. A disulfide bond links C60 and C118. N73 and N155 each carry an N-linked (GlcNAc...) asparagine glycan. Cystine bridges form between C160/C203 and C245/C297. Y187 bears the Phosphotyrosine mark. N-linked (GlcNAc...) asparagine glycosylation is found at N275, N286, N294, and N307. G324 is lipidated: GPI-anchor amidated glycine. The propeptide at 325–354 is removed in mature form; sequence SADVLFSCWYLVLTLSSFTSIFYLKNAILQ.

The protein belongs to the immunoglobulin superfamily. IgLON family.

The protein resides in the cell membrane. Functionally, may be involved in cell-adhesion. May function as a trans-neural growth-promoting factor in regenerative axon sprouting in the mammalian brain. This Pongo abelii (Sumatran orangutan) protein is Neuronal growth regulator 1 (NEGR1).